A 137-amino-acid chain; its full sequence is Small ribosomal subunit protein uS9c (137 aa).

This sequence belongs to the universal ribosomal protein uS9 family.

The protein localises to the plastid. It is found in the chloroplast. In Mesostigma viride (Green alga), this protein is Small ribosomal subunit protein uS9c (rps9).